A 215-amino-acid chain; its full sequence is Pyrrolidone-carboxylate peptidase (215 aa).

Active-site residues include Glu81, Cys144, and His168.

Belongs to the peptidase C15 family. As to quaternary structure, homotetramer.

It localises to the cytoplasm. It catalyses the reaction Release of an N-terminal pyroglutamyl group from a polypeptide, the second amino acid generally not being Pro.. Functionally, removes 5-oxoproline from various penultimate amino acid residues except L-proline. This is Pyrrolidone-carboxylate peptidase from Bacillus licheniformis (strain ATCC 14580 / DSM 13 / JCM 2505 / CCUG 7422 / NBRC 12200 / NCIMB 9375 / NCTC 10341 / NRRL NRS-1264 / Gibson 46).